The sequence spans 84 residues: MKPDIHPNYRVVVFHDTSANAYFTIGSTIRTERTITLNGEEYPYVTVDVSSESHPFYTGKQKTLSQEGSTARFQKKFGRFIGNK.

Belongs to the bacterial ribosomal protein bL31 family. Type B subfamily. In terms of assembly, part of the 50S ribosomal subunit.

The polypeptide is Large ribosomal subunit protein bL31B (Photorhabdus laumondii subsp. laumondii (strain DSM 15139 / CIP 105565 / TT01) (Photorhabdus luminescens subsp. laumondii)).